A 287-amino-acid polypeptide reads, in one-letter code: Large ribosomal subunit protein uL5m (287 aa).

The N-terminal 18 residues, 1 to 18 (MLGIRKNIRISVNFLQRR), are a transit peptide targeting the mitochondrion. The span at 80–89 (DEHTQKDRLP) shows a compositional bias: basic and acidic residues. The segment at 80 to 109 (DEHTQKDRLPRWIGDNPYYKNRPPQKMRGN) is disordered.

This sequence belongs to the universal ribosomal protein uL5 family. In terms of assembly, component of the mitochondrial large ribosomal subunit (mt-LSU). Mature yeast 74S mitochondrial ribosomes consist of a small (37S) and a large (54S) subunit. The 37S small subunit contains a 15S ribosomal RNA (15S mt-rRNA) and at least 32 different proteins. The 54S large subunit contains a 21S rRNA (21S mt-rRNA) and at least 45 different proteins. Unlike bacterial L5, uL5m does not bind zinc.

The protein localises to the mitochondrion. Functionally, component of the mitochondrial ribosome (mitoribosome), a dedicated translation machinery responsible for the synthesis of mitochondrial genome-encoded proteins, including at least some of the essential transmembrane subunits of the mitochondrial respiratory chain. The mitoribosomes are attached to the mitochondrial inner membrane and translation products are cotranslationally integrated into the membrane. The sequence is that of Large ribosomal subunit protein uL5m (mrpl7) from Schizosaccharomyces pombe (strain 972 / ATCC 24843) (Fission yeast).